The sequence spans 329 residues: Taste receptor type 2 member 134 (329 aa).

Over 1–27 (MRCSLRGCVQGRGGKSGVSLSKFSPKK) the chain is Extracellular. Residues 28–48 (MSFFFIFMVIFCIQSLVALLQ) form a helical membrane-spanning segment. At 49-68 (NGFLATVLGREWVRSQGLPA) the chain is on the cytoplasmic side. A helical membrane pass occupies residues 69–89 (GDMIVACLAASRFCLHGVAIV). Topologically, residues 90–121 (NNFLTFVKLWSQKIYFSVLWDFVNTVNFWCTT) are extracellular. Residues 122-142 (WLAIFYCVKISSFSHPIFFWI) form a helical membrane-spanning segment. Over 143–153 (KWRISRSVPRL) the chain is Cytoplasmic. Residues 154–174 (LLGSLVIGGLSAVSSATGNTI) form a helical membrane-spanning segment. Topologically, residues 175–201 (AFQMTACENYTLAYRTRAFYAYYFRCH) are extracellular. Residue Asn183 is glycosylated (N-linked (GlcNAc...) asparagine). Residues 202–222 (AMLMWIIPFFLFLLSVILLMF) form a helical membrane-spanning segment. The Cytoplasmic portion of the chain corresponds to 223–251 (SLYRHLEHMRYRRPWSHDYSTQAHTMALK). The chain crosses the membrane as a helical span at residues 252–272 (SLAFFLVFYTSYVLFLVISVT). Topologically, residues 273–282 (RVVNVHSSWH) are extracellular. A helical transmembrane segment spans residues 283 to 303 (WAWEVITYMGILLHSTILTLS). Residues 304 to 329 (NPKMRKALKIKFPDLCVARSQDKRRG) lie on the Cytoplasmic side of the membrane.

The protein belongs to the G-protein coupled receptor T2R family. Expressed in tongue and gastrointestinal tract.

Its subcellular location is the membrane. In terms of biological role, putative taste receptor which may play a role in the perception of bitterness. In Rattus norvegicus (Rat), this protein is Taste receptor type 2 member 134.